A 612-amino-acid polypeptide reads, in one-letter code: Elongation factor 4 (612 aa).

Residues 11 to 193 enclose the tr-type G domain; it reads KHIRNFSIVA…EIVKKVPAPN (183 aa). GTP is bound by residues 23 to 28 and 140 to 143; these read DHGKST and NKID.

This sequence belongs to the TRAFAC class translation factor GTPase superfamily. Classic translation factor GTPase family. LepA subfamily.

The protein localises to the cell membrane. It catalyses the reaction GTP + H2O = GDP + phosphate + H(+). Functionally, required for accurate and efficient protein synthesis under certain stress conditions. May act as a fidelity factor of the translation reaction, by catalyzing a one-codon backward translocation of tRNAs on improperly translocated ribosomes. Back-translocation proceeds from a post-translocation (POST) complex to a pre-translocation (PRE) complex, thus giving elongation factor G a second chance to translocate the tRNAs correctly. Binds to ribosomes in a GTP-dependent manner. The protein is Elongation factor 4 of Lactobacillus gasseri (strain ATCC 33323 / DSM 20243 / BCRC 14619 / CIP 102991 / JCM 1131 / KCTC 3163 / NCIMB 11718 / NCTC 13722 / AM63).